The sequence spans 492 residues: Trichothecene C-15 hydroxylase (492 aa).

The chain crosses the membrane as a helical span at residues 6–26 (LWPLLALSGGTGLAYLVVVVV). Positions 88-106 (AMKDVRGHRKSGEPEHGKD) are enriched in basic and acidic residues. Residues 88-116 (AMKDVRGHRKSGEPEHGKDPISVQSNGDN) form a disordered region. N-linked (GlcNAc...) asparagine glycosylation is found at Asn124, Asn198, and Asn290. Residue Cys438 participates in heme binding.

The protein belongs to the cytochrome P450 family. The cofactor is heme.

It localises to the membrane. It participates in sesquiterpene biosynthesis; trichothecene biosynthesis. Trichothecene C-15 hydroxylase; part of the core gene cluster that mediates the biosynthesis of trichothecenes, a very large family of chemically related bicyclic sesquiterpene compounds acting as mycotoxins, including T2-toxin. The biosynthesis of trichothecenes begins with the cyclization of farnesyl diphosphate to trichodiene and is catalyzed by the trichodiene synthase TRI5. Trichodiene undergoes a series of oxygenations catalyzed by the cytochrome P450 monooxygenase TRI4. TRI4 controls the addition of four oxygens at C-2, C-3, C-11, and the C-12, C-13-epoxide to form the intermediate isotrichotriol. Isotrichotriol then undergoes a non-enzymatic isomerization and cyclization to form isotrichodermol. During this process, the oxygen at the C-2 position becomes the pyran ring oxygen and the hydroxyl group at C-11 is lost. More complex type A trichothecenes are built by modifying isotrichodermol through a series of paired hydroxylation and acetylation or acylation steps. Isotrichodermol is converted to isotrichodermin by the acetyltransferase TRI101. TRI101 encodes a C-3 transacetylase that acts as a self-protection or resistance factor during biosynthesis and that the presence of a free C-3 hydroxyl group is a key component of Fusarium trichothecene phytotoxicity. A second hydroxyl group is added to C-15 by the trichothecene C-15 hydroxylase TRI11, producing 15-decalonectrin, which is then acetylated by TRI3, producing calonectrin. A third hydroxyl group is added at C-4 by the cytochrome P450 monooxygenase TRI13, converting calonectrin to 3,15-diacetoxyspirpenol, which is subsequently acetylated by the acetyltransferase TRI7. A fourth hydroxyl group is added to C-8 by the cytochrome P450 monooxygenase TRI1, followed by the addition of an isovaleryl moiety by TRI16. Finally, the acetyl group is removed from the C-3 position by the trichothecene C-3 esterase TRI8 to produce T-2 toxin. The protein is Trichothecene C-15 hydroxylase of Fusarium sporotrichioides.